The sequence spans 251 residues: Hydroxyacylglutathione hydrolase (251 aa).

Positions 53, 55, 57, 58, 110, 127, and 165 each coordinate Zn(2+).

The protein belongs to the metallo-beta-lactamase superfamily. Glyoxalase II family. In terms of assembly, monomer. Requires Zn(2+) as cofactor.

It carries out the reaction an S-(2-hydroxyacyl)glutathione + H2O = a 2-hydroxy carboxylate + glutathione + H(+). Its pathway is secondary metabolite metabolism; methylglyoxal degradation; (R)-lactate from methylglyoxal: step 2/2. Functionally, thiolesterase that catalyzes the hydrolysis of S-D-lactoyl-glutathione to form glutathione and D-lactic acid. This Escherichia fergusonii (strain ATCC 35469 / DSM 13698 / CCUG 18766 / IAM 14443 / JCM 21226 / LMG 7866 / NBRC 102419 / NCTC 12128 / CDC 0568-73) protein is Hydroxyacylglutathione hydrolase.